Reading from the N-terminus, the 132-residue chain is Large ribosomal subunit protein uL14 (132 aa).

It belongs to the universal ribosomal protein uL14 family. In terms of assembly, part of the 50S ribosomal subunit. Forms a cluster with proteins L3 and L24e, part of which may contact the 16S rRNA in 2 intersubunit bridges.

Functionally, binds to 23S rRNA. Forms part of two intersubunit bridges in the 70S ribosome. The sequence is that of Large ribosomal subunit protein uL14 from Methanospirillum hungatei JF-1 (strain ATCC 27890 / DSM 864 / NBRC 100397 / JF-1).